We begin with the raw amino-acid sequence, 374 residues long: Glutamate 5-kinase (374 aa).

Residue Lys13 coordinates ATP. 3 residues coordinate substrate: Ser54, Asp141, and Asn153. Ser173–Asp174 contacts ATP. A PUA domain is found at Lys278–Pro355.

The protein belongs to the glutamate 5-kinase family.

It localises to the cytoplasm. It carries out the reaction L-glutamate + ATP = L-glutamyl 5-phosphate + ADP. Its pathway is amino-acid biosynthesis; L-proline biosynthesis; L-glutamate 5-semialdehyde from L-glutamate: step 1/2. Catalyzes the transfer of a phosphate group to glutamate to form L-glutamate 5-phosphate. This is Glutamate 5-kinase from Roseobacter denitrificans (strain ATCC 33942 / OCh 114) (Erythrobacter sp. (strain OCh 114)).